The primary structure comprises 113 residues: Ig kappa chain V-II region MOPC 511 (113 aa).

Positions 1 to 23 (DIVITQDELSKPVTSGESVSISC) are framework-1. The cysteines at positions 23 and 93 are disulfide-linked. A complementarity-determining-1 region spans residues 24–39 (RSSKSLLYKDGKTYLN). The interval 40-54 (WFLQGPQQSPRLLIY) is framework-2. The tract at residues 55-61 (LMSTRAS) is complementarity-determining-2. The interval 62 to 93 (GVSDRFSGSGSGTDFTLEISRVKAEDVGVYYC) is framework-3. A complementarity-determining-3 region spans residues 94-102 (QQLVEYPLT). A framework-4 region spans residues 103–112 (FGAGTKLELK).

In Mus musculus (Mouse), this protein is Ig kappa chain V-II region MOPC 511.